The primary structure comprises 562 residues: Arylsulfatase H (562 aa).

Positions 15, 16, and 55 each coordinate Ca(2+). The Nucleophile role is filled by Cys55. Residue Cys55 is modified to 3-oxoalanine (Cys). Lys115 provides a ligand contact to substrate. His117 is a catalytic residue. Transmembrane regions (helical) follow at residues 167–187 and 189–209; these read LWISTVALALVPFLLLIPKFA and WFSVPWKVIFVFALLAFLFFT. His271 is a binding site for substrate. Residues Asp323 and Asn324 each contribute to the Ca(2+) site. Lys348 is a binding site for substrate.

The protein belongs to the sulfatase family. Requires Ca(2+) as cofactor. In terms of processing, the conversion to 3-oxoalanine (also known as C-formylglycine, FGly), of a serine or cysteine residue in prokaryotes and of a cysteine residue in eukaryotes, is critical for catalytic activity.

Its subcellular location is the membrane. This Homo sapiens (Human) protein is Arylsulfatase H (ARSH).